The primary structure comprises 291 residues: Stomatin-like protein 3 (291 aa).

Residue S7 is modified to Phosphoserine. Residues 29–49 traverse the membrane as a helical; Signal-anchor for type III membrane protein segment; sequence WILFSLSFLLVIITFPISIWM. The Cytoplasmic segment spans residues 50 to 291; that stretch reads CLKIIKEYER…DNHKKLPNKA (242 aa). S241 carries the phosphoserine modification.

Belongs to the band 7/mec-2 family. As to quaternary structure, homodimer. Interacts with PIEZO1 and PIEZO2.

The protein localises to the cell membrane. Its function is as follows. Required for the function of many mechanoreceptors. Modulate mechanotransduction channels and acid-sensing ion channels (ASIC) proteins. Potentiates PIEZO1 and PIEZO2 function by increasing their sensitivity to mechanical stimulations. The protein is Stomatin-like protein 3 (STOML3) of Homo sapiens (Human).